A 1310-amino-acid polypeptide reads, in one-letter code: Vacuolating cytotoxin autotransporter (1310 aa).

The first 30 residues, 1-30 (MEIQQTHRKINRPIISLALVGVLMGTELGA), serve as a signal peptide directing secretion. The segment at 339–364 (PEGGYESKTKDNPQNNPKNDAQKTEI) is disordered. Positions 350–364 (NPQNNPKNDAQKTEI) are enriched in polar residues. Positions 1038 to 1310 (KYEKPTNVWA…ASNLGMRYSF (273 aa)) constitute an Autotransporter domain.

It is found in the periplasm. The protein resides in the secreted. The protein localises to the cell surface. It localises to the cell outer membrane. Functionally, induces vacuolation of eukaryotic cells. Causes ulceration and gastric lesions. This chain is Vacuolating cytotoxin autotransporter (vacA), found in Helicobacter pylori (Campylobacter pylori).